Consider the following 826-residue polypeptide: Ribonucleases P/MRP protein subunit POP1 (826 aa).

Disordered stretches follow at residues 1-24 and 49-91; these read MATTANGNSKKRDGGLSSLAPRKI and NKDF…SGGD. The short motif at 58–65 is the Nuclear localization signal element; sequence KRRRTNSY. Positions 70-79 are enriched in basic residues; sequence AKKRNIKRQK.

In terms of assembly, component of nuclear RNase P and RNase MRP ribonucleoproteins. RNase P consists of a catalytic RNA moiety and different protein chains. Several subunits of RNase P are also part of the RNase MRP complex. RNase MRP consists of a catalytic RNA moiety and several protein subunits.

Its subcellular location is the nucleus. The protein localises to the nucleolus. Component of ribonuclease P, a ribonucleoprotein complex that generates mature tRNA molecules by cleaving their 5'-ends. Also a component of the MRP ribonuclease complex, which cleaves pre-rRNA sequences. Required for rRNA maturation, including 5.8S rRNA processing. The protein is Ribonucleases P/MRP protein subunit POP1 of Arabidopsis thaliana (Mouse-ear cress).